A 70-amino-acid chain; its full sequence is Putative membrane protein insertion efficiency factor (70 aa).

It belongs to the UPF0161 family.

The protein localises to the cell inner membrane. Could be involved in insertion of integral membrane proteins into the membrane. The protein is Putative membrane protein insertion efficiency factor of Sphingopyxis alaskensis (strain DSM 13593 / LMG 18877 / RB2256) (Sphingomonas alaskensis).